We begin with the raw amino-acid sequence, 500 residues long: ATP synthase subunit alpha (500 aa).

167–174 (GDRQTGKT) serves as a coordination point for ATP.

Belongs to the ATPase alpha/beta chains family. As to quaternary structure, F-type ATPases have 2 components, CF(1) - the catalytic core - and CF(0) - the membrane proton channel. CF(1) has five subunits: alpha(3), beta(3), gamma(1), delta(1), epsilon(1). CF(0) has three main subunits: a(1), b(2) and c(9-12). The alpha and beta chains form an alternating ring which encloses part of the gamma chain. CF(1) is attached to CF(0) by a central stalk formed by the gamma and epsilon chains, while a peripheral stalk is formed by the delta and b chains.

Its subcellular location is the cell inner membrane. The catalysed reaction is ATP + H2O + 4 H(+)(in) = ADP + phosphate + 5 H(+)(out). In terms of biological role, produces ATP from ADP in the presence of a proton gradient across the membrane. The alpha chain is a regulatory subunit. In Wolinella succinogenes (strain ATCC 29543 / DSM 1740 / CCUG 13145 / JCM 31913 / LMG 7466 / NCTC 11488 / FDC 602W) (Vibrio succinogenes), this protein is ATP synthase subunit alpha.